The chain runs to 116 residues: MRHQCRVPQLGRPADQRKAMLRALTTQLIREGRVTTTKARAKALRDEAERMITLAKDGSLASRRRAIGYIYDKQLVHALFDKAPTRYGERKGGYTRITRTVPRRGDNAEMAIIELV.

This sequence belongs to the bacterial ribosomal protein bL17 family. As to quaternary structure, part of the 50S ribosomal subunit. Contacts protein L32.

This is Large ribosomal subunit protein bL17 from Synechococcus sp. (strain CC9902).